Reading from the N-terminus, the 62-residue chain is Large ribosomal subunit protein bL28 (62 aa).

It belongs to the bacterial ribosomal protein bL28 family.

The sequence is that of Large ribosomal subunit protein bL28 from Helicobacter pylori (strain HPAG1).